The sequence spans 920 residues: Isoleucine--tRNA ligase (920 aa).

The short motif at 58–68 is the 'HIGH' region element; it reads PYANGHLHLGH. Glu569 is a binding site for L-isoleucyl-5'-AMP. The 'KMSKS' region signature appears at 610–614; it reads KMSKS. Lys613 is an ATP binding site. Positions 895, 898, 910, and 913 each coordinate Zn(2+).

This sequence belongs to the class-I aminoacyl-tRNA synthetase family. IleS type 1 subfamily. In terms of assembly, monomer. Zn(2+) serves as cofactor.

It localises to the cytoplasm. The catalysed reaction is tRNA(Ile) + L-isoleucine + ATP = L-isoleucyl-tRNA(Ile) + AMP + diphosphate. Catalyzes the attachment of isoleucine to tRNA(Ile). As IleRS can inadvertently accommodate and process structurally similar amino acids such as valine, to avoid such errors it has two additional distinct tRNA(Ile)-dependent editing activities. One activity is designated as 'pretransfer' editing and involves the hydrolysis of activated Val-AMP. The other activity is designated 'posttransfer' editing and involves deacylation of mischarged Val-tRNA(Ile). The protein is Isoleucine--tRNA ligase of Helicobacter pylori (strain Shi470).